The primary structure comprises 62 residues: MKLFTQNDRYFGLLDSCTHIFCITCINIWHKTRRETGASDNCPICRTRFRNITMSKFYKLVN.

The RING-type; degenerate zinc finger occupies 1-46; sequence MKLFTQNDRYFGLLDSCTHIFCITCINIWHKTRRETGASDNCPICR.

The sequence is that of Zinc finger-containing protein P28b from Vaccinia virus (strain Western Reserve) (VACV).